The chain runs to 119 residues: Large ribosomal subunit protein bL20 (119 aa).

It belongs to the bacterial ribosomal protein bL20 family.

Its function is as follows. Binds directly to 23S ribosomal RNA and is necessary for the in vitro assembly process of the 50S ribosomal subunit. It is not involved in the protein synthesizing functions of that subunit. This chain is Large ribosomal subunit protein bL20, found in Acinetobacter baumannii (strain SDF).